Consider the following 510-residue polypeptide: uncharacterized protein (510 aa).

Positions 1–19 (MLILLILYFLFLQLHIFDS) are cleaved as a signal peptide. Residues 28–48 (IYIHYAICKFIFLLEIYKLIA) traverse the membrane as a helical segment.

It localises to the host membrane. This is an uncharacterized protein from Sulfolobus islandicus rod-shaped virus 1 (SIRV-1).